A 364-amino-acid chain; its full sequence is Urease accessory protein UreD (364 aa).

Disordered stretches follow at residues 1–37 (MDQD…SSPA) and 201–250 (PPEV…AGER). Composition is skewed to low complexity over residues 21 to 37 (AGSA…SSPA), 209 to 218 (APDRGAPAAE), and 236 to 248 (AASS…APAG).

Belongs to the UreD family. As to quaternary structure, ureD, UreF and UreG form a complex that acts as a GTP-hydrolysis-dependent molecular chaperone, activating the urease apoprotein by helping to assemble the nickel containing metallocenter of UreC. The UreE protein probably delivers the nickel.

It is found in the cytoplasm. Its function is as follows. Required for maturation of urease via the functional incorporation of the urease nickel metallocenter. This is Urease accessory protein UreD from Kocuria rhizophila (strain ATCC 9341 / DSM 348 / NBRC 103217 / DC2201).